The sequence spans 122 residues: Large ribosomal subunit protein uL14 (122 aa).

The protein belongs to the universal ribosomal protein uL14 family. Part of the 50S ribosomal subunit. Forms a cluster with proteins L3 and L19. In the 70S ribosome, L14 and L19 interact and together make contacts with the 16S rRNA in bridges B5 and B8.

In terms of biological role, binds to 23S rRNA. Forms part of two intersubunit bridges in the 70S ribosome. The sequence is that of Large ribosomal subunit protein uL14 from Dehalococcoides mccartyi (strain ATCC BAA-2266 / KCTC 15142 / 195) (Dehalococcoides ethenogenes (strain 195)).